The following is a 199-amino-acid chain: Glycerol-3-phosphate acyltransferase (199 aa).

4 helical membrane-spanning segments follow: residues 2–22 (LEVL…GILV), 77–97 (PWVL…PVFL), 113–133 (IALA…VALA), and 139–159 (LAAM…GQPL).

This sequence belongs to the PlsY family. As to quaternary structure, probably interacts with PlsX.

The protein localises to the cell membrane. The enzyme catalyses an acyl phosphate + sn-glycerol 3-phosphate = a 1-acyl-sn-glycero-3-phosphate + phosphate. It participates in lipid metabolism; phospholipid metabolism. Its function is as follows. Catalyzes the transfer of an acyl group from acyl-phosphate (acyl-PO(4)) to glycerol-3-phosphate (G3P) to form lysophosphatidic acid (LPA). This enzyme utilizes acyl-phosphate as fatty acyl donor, but not acyl-CoA or acyl-ACP. This Rubrobacter xylanophilus (strain DSM 9941 / JCM 11954 / NBRC 16129 / PRD-1) protein is Glycerol-3-phosphate acyltransferase.